Here is a 444-residue protein sequence, read N- to C-terminus: Enolase (444 aa).

Ser-40 contacts Mg(2+). Phosphoserine is present on Ser-40. The Pentapeptide insert signature appears at 102-106 (EWGWS). Lys-131 carries the post-translational modification N6-acetyllysine. Residue Lys-136 forms a Glycyl lysine isopeptide (Lys-Gly) (interchain with G-Cter in ubiquitin) linkage. Tyr-137 carries the phosphotyrosine modification. Substrate-binding residues include His-164 and Glu-173. The active-site Proton donor is the Glu-216. Residue Asp-251 participates in Mg(2+) binding. The short motif at 275 to 280 (DKSLVK) is the DKSLVK motif element. Residues Glu-302 and Asp-329 each coordinate Mg(2+). Residues Glu-302 and Asp-329 each contribute to the substrate site. The residue at position 337 (Thr-337) is a Phosphothreonine. Lys-354 serves as the catalytic Proton acceptor. Lys-373 is modified (N6-acetyllysine). Substrate contacts are provided by residues 381–384 (SHRS) and Lys-405.

It belongs to the enolase family. In terms of assembly, homodimer. Forms a complex at least composed of DegP, ENO and HSP70. Interacts with G-actin. Interacts (via the DKSLVK motif) with mammalian host PLG/plasminogen (present in the mosquito blood meal); the interaction occurs at the ookinete cell surface and is required for ookinete invasion of the mosquito midgut. Interacts with A.gambiae EBP; depending on the Plasmodium species, the interaction is either involved in ookinete invasion of the mosquito midgut (P.berghei) or is dispensable (P.falciparum). Mg(2+) is required as a cofactor.

It localises to the cytoplasm. Its subcellular location is the nucleus. The protein resides in the cytoskeleton. It is found in the cell surface. The protein localises to the cell membrane. It localises to the vacuole. It carries out the reaction (2R)-2-phosphoglycerate = phosphoenolpyruvate + H2O. It functions in the pathway carbohydrate degradation; glycolysis; pyruvate from D-glyceraldehyde 3-phosphate: step 4/5. Functionally, glycolytic enzyme that catalyzes the conversion of 2-phosphoglycerate to phosphoenolpyruvate. In addition to glycolysis, involved in various processes such as parasite development and invasion. Plays an essential role during ookinete invasion of the mosquito vector midgut by mediating the interaction of the ookinete with the midgut epithelium and, further, by binding to mammalian host plasminogen in the blood meal, whose conversion to active plasmin promotes the invasion process. This Plasmodium yoelii yoelii protein is Enolase.